An 83-amino-acid polypeptide reads, in one-letter code: U5-theraphotoxin-Hs1d (83 aa).

Positions 1 to 21 (MKTSMFLTLTGLVLLFVVCYA) are cleaved as a signal peptide. The propeptide occupies 22-49 (SESEEKEFPKELLSSIFAADSDFKVEER). 3 disulfide bridges follow: C51-C63, C56-C68, and C62-C75.

It belongs to the neurotoxin 10 (Hwtx-1) family. 51 (Hntx-8) subfamily. Hntx-8 sub-subfamily. In terms of tissue distribution, expressed by the venom gland.

It is found in the secreted. Agglutinates erythrocytes. This is U5-theraphotoxin-Hs1d from Cyriopagopus schmidti (Chinese bird spider).